A 524-amino-acid chain; its full sequence is Serine/threonine-protein kinase PAK 2 (524 aa).

Residues 1-81 (MSDNGELEDK…PEISPPSDFE (81 aa)) are disordered. Ser-2 carries the N-acetylserine modification. Phosphoserine is present on residues Ser-2, Ser-20, Ser-55, and Ser-58. Phosphothreonine is present on Thr-60. Lys-62 bears the N6-acetyllysine mark. At Ser-64 the chain carries Phosphoserine. Basic and acidic residues predominate over residues 67–81 (KEKERPEISPPSDFE). The GTPase-binding stretch occupies residues 69-112 (KERPEISPPSDFEHTIHVGFDAVTGEFTGMPEQWARLLQTSNIT). Positions 69-137 (KERPEISPPS…KFYDSNTVKQ (69 aa)) are autoregulatory region. In terms of domain architecture, CRIB spans 74–87 (ISPPSDFEHTIHVG). Lys-128 carries the post-translational modification N6-acetyllysine. At Thr-134 the chain carries Phosphothreonine. Tyr-139 bears the Phosphotyrosine mark. A Phosphoserine modification is found at Ser-141. At Thr-143 the chain carries Phosphothreonine. Disordered stretches follow at residues 143–164 (TPPE…GTEA) and 169–188 (TEEE…PRPD). Ser-152 bears the Phosphoserine mark. Phosphothreonine is present on residues Thr-154 and Thr-169. Acidic residues predominate over residues 169-178 (TEEEDDDEET). Ser-197 is modified (phosphoserine). Gly-213 is lipidated: N-myristoyl glycine; in form PAK-2p34. Positions 245 to 251 (PKKKYTR) match the Nuclear localization signal motif. Residues 249 to 499 (YTRYEKIGQG…SAKELLQHPF (251 aa)) form the Protein kinase domain. Residues 255 to 263 (IGQGASGTV) and Lys-278 each bind ATP. The Proton acceptor role is filled by Arg-367. At Thr-402 the chain carries Phosphothreonine; by autocatalysis.

This sequence belongs to the protein kinase superfamily. STE Ser/Thr protein kinase family. STE20 subfamily. Interacts tightly with GTP-bound but not GDP-bound CDC42/p21 and RAC1. Interacts with SH3MD4. Interacts with SCRIB. Interacts with ARHGEF7 and GIT1. PAK-2p34 interacts with ARHGAP10. As to quaternary structure, (Microbial infection) Interacts with and activated by HIV-1 Nef. Full-length PAK2 is autophosphorylated when activated by CDC42/p21. Following cleavage, both peptides, PAK-2p27 and PAK-2p34, become highly autophosphorylated, with PAK-2p27 being phosphorylated on serine and PAK-2p34 on threonine residues, respectively. Autophosphorylation of PAK-2p27 can occur in the absence of any effectors and is dependent on phosphorylation of Thr-402, because PAK-2p27 is acting as an exogenous substrate. Post-translationally, during apoptosis proteolytically cleaved by caspase-3 or caspase-3-like proteases to yield active PAK-2p34. In terms of processing, ubiquitinated, leading to its proteasomal degradation. PAK-2p34 is myristoylated. As to expression, ubiquitously expressed. Higher levels seen in skeletal muscle, ovary, thymus and spleen.

It localises to the cytoplasm. The protein resides in the nucleus. Its subcellular location is the perinuclear region. It is found in the membrane. The enzyme catalyses L-seryl-[protein] + ATP = O-phospho-L-seryl-[protein] + ADP + H(+). It catalyses the reaction L-threonyl-[protein] + ATP = O-phospho-L-threonyl-[protein] + ADP + H(+). Its activity is regulated as follows. Activated by binding small G proteins. Binding of GTP-bound CDC42 or RAC1 to the autoregulatory region releases monomers from the autoinhibited dimer, enables phosphorylation of Thr-402 and allows the kinase domain to adopt an active structure. Following caspase cleavage, autophosphorylated PAK-2p34 is constitutively active. Serine/threonine protein kinase that plays a role in a variety of different signaling pathways including cytoskeleton regulation, cell motility, cell cycle progression, apoptosis or proliferation. Acts as a downstream effector of the small GTPases CDC42 and RAC1. Activation by the binding of active CDC42 and RAC1 results in a conformational change and a subsequent autophosphorylation on several serine and/or threonine residues. Full-length PAK2 stimulates cell survival and cell growth. Phosphorylates MAPK4 and MAPK6 and activates the downstream target MAPKAPK5, a regulator of F-actin polymerization and cell migration. Phosphorylates JUN and plays an important role in EGF-induced cell proliferation. Phosphorylates many other substrates including histone H4 to promote assembly of H3.3 and H4 into nucleosomes, BAD, ribosomal protein S6, or MBP. Phosphorylates CASP7, thereby preventing its activity. Additionally, associates with ARHGEF7 and GIT1 to perform kinase-independent functions such as spindle orientation control during mitosis. On the other hand, apoptotic stimuli such as DNA damage lead to caspase-mediated cleavage of PAK2, generating PAK-2p34, an active p34 fragment that translocates to the nucleus and promotes cellular apoptosis involving the JNK signaling pathway. Caspase-activated PAK2 phosphorylates MKNK1 and reduces cellular translation. The polypeptide is Serine/threonine-protein kinase PAK 2 (PAK2) (Homo sapiens (Human)).